The following is a 276-amino-acid chain: Large ribosomal subunit protein uL2 (276 aa).

Positions 219–276 (TVRGSAMNPNDHPHGGGEGRTSIGRPAPVTPWGKPALGYKTRDSKKASNKMIVSRRKK) are disordered.

The protein belongs to the universal ribosomal protein uL2 family. As to quaternary structure, part of the 50S ribosomal subunit. Forms a bridge to the 30S subunit in the 70S ribosome.

Its function is as follows. One of the primary rRNA binding proteins. Required for association of the 30S and 50S subunits to form the 70S ribosome, for tRNA binding and peptide bond formation. It has been suggested to have peptidyltransferase activity; this is somewhat controversial. Makes several contacts with the 16S rRNA in the 70S ribosome. This Alkaliphilus oremlandii (strain OhILAs) (Clostridium oremlandii (strain OhILAs)) protein is Large ribosomal subunit protein uL2.